Consider the following 141-residue polypeptide: UPF0102 protein BRADO0179 (141 aa).

The segment at 1-24 (MAETDRATDKPAGAPKPAKTASPE) is disordered. Residues 10–19 (KPAGAPKPAK) show a composition bias toward low complexity.

Belongs to the UPF0102 family.

The protein is UPF0102 protein BRADO0179 of Bradyrhizobium sp. (strain ORS 278).